The chain runs to 353 residues: Nicotinate-nucleotide--dimethylbenzimidazole phosphoribosyltransferase (353 aa).

The active-site Proton acceptor is Glu320.

It belongs to the CobT family.

It catalyses the reaction 5,6-dimethylbenzimidazole + nicotinate beta-D-ribonucleotide = alpha-ribazole 5'-phosphate + nicotinate + H(+). Its pathway is nucleoside biosynthesis; alpha-ribazole biosynthesis; alpha-ribazole from 5,6-dimethylbenzimidazole: step 1/2. In terms of biological role, catalyzes the synthesis of alpha-ribazole-5'-phosphate from nicotinate mononucleotide (NAMN) and 5,6-dimethylbenzimidazole (DMB). The polypeptide is Nicotinate-nucleotide--dimethylbenzimidazole phosphoribosyltransferase (Pseudoalteromonas translucida (strain TAC 125)).